The primary structure comprises 466 residues: Lipase 2 (466 aa).

The first 16 residues, 1–16 (MKGLVFLLGLLPTIYA), serve as a signal peptide directing secretion. C112 and C285 are oxidised to a cystine. The Charge relay system role is filled by S196. Residues N231, N319, and N331 are each glycosylated (N-linked (GlcNAc...) asparagine). Catalysis depends on charge relay system residues D348 and H381. A disulfide bond links C364 and C409. 2 N-linked (GlcNAc...) asparagine glycosylation sites follow: N422 and N451.

The protein belongs to the AB hydrolase superfamily. Lipase family. Class Lip subfamily.

The protein localises to the secreted. It carries out the reaction a triacylglycerol + H2O = a diacylglycerol + a fatty acid + H(+). Secreted lipase that is able to hydrolyze both the neutral triacylglycerols and the monopalmitate ester Tween 40, allowing the use of hydrolyzed products as carbon sources. Has broad lipolytic activity, which may be important for colonization and subsequent infection, therefore contributing to the persistence and virulence in human tissue. My be important for alimentary tract colonization, but not oral infection. Facilitates invasive disease via lipid-based suppression of the IL-17 response. Inhibits IL-17 production indirectly by suppressing IL-23 production by tissue-resident dendritic cells. The polypeptide is Lipase 2 (Candida albicans (strain SC5314 / ATCC MYA-2876) (Yeast)).